Consider the following 337-residue polypeptide: Eukaryotic translation initiation factor 3 subunit H (337 aa).

One can recognise an MPN domain in the interval 25–158; it reads VQIEGLAVLK…LKALKLSDSF (134 aa). Phosphoserine; by ATPK1 is present on Ser-178. Over residues 267 to 278 the composition is skewed to basic and acidic residues; that stretch reads RRTENMARKSAG. The tract at residues 267–290 is disordered; that stretch reads RRTENMARKSAGEEPLPEEDPSNP.

This sequence belongs to the eIF-3 subunit H family. Component of the eukaryotic translation initiation factor 3 (eIF-3) complex. Interacts directly with TIF3A1, TIF3B1, TIF3C1, TIF3E1 and TIF3F1. Associates with the CSN (COP9 signalosome) complex. Binds to CSN1, CSN7 and CSN8. Interacts with ATPK1. In terms of processing, in response to auxin (NAA), phosphorylated at Ser-178 by ATPK1 and binds to polysomes via TOR signaling. This phosphorylation is repressed by Torin-1. Mostly expressed in roots and flowers, and, to a lower extent, in leaves, stems and siliques.

It localises to the cytoplasm. Component of the eukaryotic translation initiation factor 3 (eIF-3) complex, which is involved in protein synthesis of a specialized repertoire of mRNAs and, together with other initiation factors, stimulates binding of mRNA and methionyl-tRNAi to the 40S ribosome. The eIF-3 complex specifically targets and initiates translation of a subset of mRNAs involved in cell proliferation (Potential). Regulates translation initiation of specific 5' mRNAs harboring multiple upstream open reading frames (uORFs) in their 5' leader sequence (e.g. BETA-OHASE 2 and LHY). In Arabidopsis thaliana (Mouse-ear cress), this protein is Eukaryotic translation initiation factor 3 subunit H (TIF3H1).